Here is a 557-residue protein sequence, read N- to C-terminus: Urocanate hydratase (557 aa).

A disordered region spans residues 1–20; it reads MSNPRHNEREVRSPRGDELN. NAD(+)-binding positions include 52 to 53, glutamine 130, 176 to 178, glutamate 196, arginine 201, 242 to 243, 263 to 267, 273 to 274, and tyrosine 322; these read GG, GMG, NA, QTSAH, and YL. Cysteine 410 is a catalytic residue. Residue glycine 492 participates in NAD(+) binding.

Belongs to the urocanase family. Requires NAD(+) as cofactor.

The protein resides in the cytoplasm. The catalysed reaction is 4-imidazolone-5-propanoate = trans-urocanate + H2O. It participates in amino-acid degradation; L-histidine degradation into L-glutamate; N-formimidoyl-L-glutamate from L-histidine: step 2/3. Its function is as follows. Catalyzes the conversion of urocanate to 4-imidazolone-5-propionate. The chain is Urocanate hydratase from Brucella melitensis biotype 2 (strain ATCC 23457).